The following is a 302-amino-acid chain: GTPase Era (302 aa).

In terms of domain architecture, Era-type G spans His-8–Glu-175. The tract at residues Gly-16–Ser-23 is G1. Position 16–23 (Gly-16–Ser-23) interacts with GTP. Residues Gln-42 to Asn-46 form a G2 region. The interval Asp-63–Gly-66 is G3. Residues Asp-63–Ile-67 and Asn-125–Asp-128 each bind GTP. Residues Asn-125–Asp-128 are G4. The G5 stretch occupies residues Ile-154 to Ala-156. Residues Thr-206–Glu-283 form the KH type-2 domain.

Belongs to the TRAFAC class TrmE-Era-EngA-EngB-Septin-like GTPase superfamily. Era GTPase family. In terms of assembly, monomer.

It is found in the cytoplasm. The protein resides in the cell membrane. In terms of biological role, an essential GTPase that binds both GDP and GTP, with rapid nucleotide exchange. Plays a role in 16S rRNA processing and 30S ribosomal subunit biogenesis and possibly also in cell cycle regulation and energy metabolism. The protein is GTPase Era of Lactiplantibacillus plantarum (strain ATCC BAA-793 / NCIMB 8826 / WCFS1) (Lactobacillus plantarum).